Here is a 232-residue protein sequence, read N- to C-terminus: RNA chaperone ProQ (232 aa).

The tract at residues 105 to 182 is disordered; sequence EAKARVQAQR…REEQHTPVSD (78 aa). Basic and acidic residues-rich tracts occupy residues 117 to 138 and 147 to 177; these read QQAKKREAAAAAGEKEDAPPRE and RRKEGAERKPRAQKPVEKAPKTVKAPREEQH.

Belongs to the ProQ family.

Its subcellular location is the cytoplasm. RNA chaperone with significant RNA binding, RNA strand exchange and RNA duplexing activities. May regulate ProP activity through an RNA-based, post-transcriptional mechanism. In Escherichia coli O139:H28 (strain E24377A / ETEC), this protein is RNA chaperone ProQ.